The primary structure comprises 256 residues: Zinc import ATP-binding protein ZnuC (256 aa).

The ABC transporter domain occupies 6–221 (IAAEGLSIRV…PEYRALFGTG (216 aa)). 38–45 (GPNGSGKS) serves as a coordination point for ATP. The interval 237–256 (HDDDCGHDHGAEHMHPHGDR) is disordered.

It belongs to the ABC transporter superfamily. Zinc importer (TC 3.A.1.15.5) family. As to quaternary structure, the complex is composed of two ATP-binding proteins (ZnuC), two transmembrane proteins (ZnuB) and a solute-binding protein (ZnuA).

Its subcellular location is the cell inner membrane. The catalysed reaction is Zn(2+)(out) + ATP(in) + H2O(in) = Zn(2+)(in) + ADP(in) + phosphate(in) + H(+)(in). Functionally, part of the ABC transporter complex ZnuABC involved in zinc import. Responsible for energy coupling to the transport system. The protein is Zinc import ATP-binding protein ZnuC of Ruegeria pomeroyi (strain ATCC 700808 / DSM 15171 / DSS-3) (Silicibacter pomeroyi).